The primary structure comprises 523 residues: Amino acid transporter protein 6 (523 aa).

Residues 1-19 (MLNVFGVSASMPDDSRSQK) lie on the Cytoplasmic side of the membrane. A helical membrane pass occupies residues 20–40 (MGLLGAISYIVGNIVGSGIFI). The Extracellular segment spans residues 41-51 (TPTSIIENVNS). The helical transmembrane segment at 52–72 (VGLSLAIWILAAFISMLGSFC) threads the bilayer. Topologically, residues 73–86 (YVELGTSIRLSGGD) are cytoplasmic. The helical transmembrane segment at 87-107 (FAYLCFMKWYPVAFAFMCIGC) threads the bilayer. Over 108 to 145 (TINYPATLAVQAQTFAEYVFRGAGVELDETSEFWAKKL) the chain is Extracellular. Residues 146–166 (LGFSLIILLMFMNFFSLKTFV) form a helical membrane-spanning segment. Residues 167-173 (QRFSILA) lie on the Cytoplasmic side of the membrane. A helical membrane pass occupies residues 174 to 194 (SLAKIAATLLIIITGFYYLIF). The Extracellular portion of the chain corresponds to 195-214 (KHWKQNLEEPFKGSNWNPGP). Residues 215 to 235 (FVNALFAGLFSYDGWDILNFG) form a helical membrane-spanning segment. Residues 236-249 (AEEIENPKRTMPLS) are Cytoplasmic-facing. The chain crosses the membrane as a helical span at residues 250-270 (IIIGMTCIGVIYVAVNVAYSI). Residues 271-290 (VLSPTEMIASNAVAIDFANK) are Extracellular-facing. N-linked (GlcNAc...) asparagine glycosylation is present at N289. Residues 291-311 (TLGAAAFVVPVMVAILLIGSL) form a helical membrane-spanning segment. Over 312–348 (NSTMFSASRYLQAVSRQGHIPSAISGIAPNCDSPRVA) the chain is Cytoplasmic. A helical membrane pass occupies residues 349 to 369 (LLVHILIAIAVSFLGDPDKLI). Residues 370–404 (NYVAFAQWSQRAFTMSALLYLRIRGRPRHPDRIQL) are Extracellular-facing. The chain crosses the membrane as a helical span at residues 405–425 (PIIMPILFFLVCTSMVVISII). The Cytoplasmic portion of the chain corresponds to 426–429 (DDFK). A helical transmembrane segment spans residues 430 to 450 (SSAVGLGILLGGLIIFIIFVW). At 451–523 (DRALPSSHTF…GNGQFKCTRM (73 aa)) the chain is on the extracellular side. An N-linked (GlcNAc...) asparagine glycan is attached at N462. Residues 521–523 (TRM) carry the PDZ-binding motif motif.

The protein belongs to the amino acid-polyamine-organocation (APC) superfamily. In terms of assembly, interacts (via PDZ-binding motif) with nfrl-1 (via PDZ 2 domain); the interaction with nrfl-1 is required to sequester aat-6 to the apical cell membrane of intestinal cells. As to expression, expressed at the apical cell membrane of intestinal cells.

It localises to the apical cell membrane. Amino acid transporter that mediates the uptake of the L-enantiomers of various amino acids, including L-glutamate. May play a role in promoting fertility. The chain is Amino acid transporter protein 6 from Caenorhabditis elegans.